A 120-amino-acid chain; its full sequence is NAD(P)H-quinone oxidoreductase subunit 3, chloroplastic (120 aa).

3 helical membrane passes run 9 to 29, 64 to 84, and 88 to 108; these read IFWAFLIISSVIPILAFLISG, MFALVFVVFDVETVFLYPWAM, and VLGLSVFIEALIFVLILIVGS.

The protein belongs to the complex I subunit 3 family. As to quaternary structure, NDH is composed of at least 16 different subunits, 5 of which are encoded in the nucleus.

The protein localises to the plastid. The protein resides in the chloroplast thylakoid membrane. It catalyses the reaction a plastoquinone + NADH + (n+1) H(+)(in) = a plastoquinol + NAD(+) + n H(+)(out). It carries out the reaction a plastoquinone + NADPH + (n+1) H(+)(in) = a plastoquinol + NADP(+) + n H(+)(out). In terms of biological role, NDH shuttles electrons from NAD(P)H:plastoquinone, via FMN and iron-sulfur (Fe-S) centers, to quinones in the photosynthetic chain and possibly in a chloroplast respiratory chain. The immediate electron acceptor for the enzyme in this species is believed to be plastoquinone. Couples the redox reaction to proton translocation, and thus conserves the redox energy in a proton gradient. The polypeptide is NAD(P)H-quinone oxidoreductase subunit 3, chloroplastic (Manihot esculenta (Cassava)).